Reading from the N-terminus, the 138-residue chain is Basic phospholipase A2 ammodytoxin C (138 aa).

Positions 1–16 (MRTLWIVAVCLIGVEG) are cleaved as a signal peptide. Intrachain disulfides connect C42–C131, C44–C60, C59–C111, C65–C138, C66–C104, C73–C97, and C91–C102. Ca(2+) contacts are provided by Y43, G45, and G47. The active site involves H63. A Ca(2+)-binding site is contributed by D64. The active site involves D105.

Belongs to the phospholipase A2 family. Group II subfamily. D49 sub-subfamily. In terms of assembly, monomer. Binds to calmodulin, coagulation factor X (F10), 14-3-3 proteins gamma (YWHAG) and epsilon (YWHAE), and R25, a mitochondrial membrane protein. May bind to M-type PLA2 receptor (R-180). Ca(2+) serves as cofactor. In terms of tissue distribution, expressed by the venom gland.

The protein resides in the secreted. The protein localises to the host cytoplasm. Its subcellular location is the host cytosol. It carries out the reaction a 1,2-diacyl-sn-glycero-3-phosphocholine + H2O = a 1-acyl-sn-glycero-3-phosphocholine + a fatty acid + H(+). Its function is as follows. Snake venom phospholipase A2 (PLA2) that acts as a presynaptic neurotoxin, an inhibitor of blood coagulation, and has been found to bind with high affinity to intracellular proteins. The response of indirectly stimulated neuromuscular preparations to ammodytoxin (Atx) is triphasic. The first phase, the transient inhibition of the acetylcholine (ACh) release, starts soon after the addition of Atx and lasts for several minutes. This phase is probably independent of Atx enzymatic activity. The effect may be due to the specific binding of the toxin to presynaptic receptors. These receptors, called N-type receptors, are still unidentified. It is noteworthy that a neuronal isoform of the M-type PLA2 receptor (R180) has been identified as a high-affinity receptor for Atx in neuronal plasma membranes. It was demonstrated however that this receptor is not essential for expression of neurotoxicity by Atx. The second phase corresponds to an augmentation of neurotransmitter release. A peak is reached 10-20 minutes after exposure of the preparation to Atx and is followed by a gradual reduction. In this phase, the enzymatic activity of Atx of the mammalian is not significant. It is speculated that the increased release of neurotransmitter in this phase is induced by the interference of Atx with voltage-gated potassium channels. Measurements of ionic showed however that voltage-gated potassium channels are not affected by Atx. The third phase of the response of neuromuscular preparations to Atx, which corresponds to a complete and irreversible paralysis, is clearly dependent on the hydrolytic activity of the toxin. In addition to its presynaptic neurotoxicity, Atx shows an anticoagulant activity by binding with high affinity to activated coagulation factor X (F10) thus inhibiting the formation of the prothrombinase complex (FX/FV) and its activity (IC(50) is 240 nM). Surprisingly, Atx was discovered to bind intracellular proteins such as calmodulin (CaM), 14-3-3 proteins gamma (YWHAG) and epsilon (YWHAE), as well as R25, a mitochondrial integral membrane protein found in cerebral cortex. These findings raised a doubt about the dogma of the exclusively extracellular action of PLA2s, defended by the potential instability of these molecules in the reducing environment of the eukaryotic cytosol coupled with their possible inability to act as enzymes in this cellular compartment, due to too low concentration of calcium ions. This hypothesis was challenged efficiently by demonstrating the internalization of AtxA into a culture cells, but still remains to be directly demonstrated in vivo. PLA2 catalyzes the calcium-dependent hydrolysis of the 2-acyl groups in 3-sn-phosphoglycerides. The protein is Basic phospholipase A2 ammodytoxin C of Vipera ammodytes ammodytes (Western sand viper).